A 502-amino-acid chain; its full sequence is ATP synthase subunit alpha (502 aa).

Residue 169-176 (GDRQTGKT) participates in ATP binding.

It belongs to the ATPase alpha/beta chains family. In terms of assembly, F-type ATPases have 2 components, CF(1) - the catalytic core - and CF(0) - the membrane proton channel. CF(1) has five subunits: alpha(3), beta(3), gamma(1), delta(1), epsilon(1). CF(0) has three main subunits: a(1), b(2) and c(9-12). The alpha and beta chains form an alternating ring which encloses part of the gamma chain. CF(1) is attached to CF(0) by a central stalk formed by the gamma and epsilon chains, while a peripheral stalk is formed by the delta and b chains.

The protein resides in the cell membrane. It catalyses the reaction ATP + H2O + 4 H(+)(in) = ADP + phosphate + 5 H(+)(out). In terms of biological role, produces ATP from ADP in the presence of a proton gradient across the membrane. The alpha chain is a regulatory subunit. This Bacillus pumilus (strain SAFR-032) protein is ATP synthase subunit alpha.